Consider the following 148-residue polypeptide: Large ribosomal subunit protein bL9 (148 aa).

It belongs to the bacterial ribosomal protein bL9 family.

In terms of biological role, binds to the 23S rRNA. The chain is Large ribosomal subunit protein bL9 from Methylococcus capsulatus (strain ATCC 33009 / NCIMB 11132 / Bath).